The primary structure comprises 169 residues: S-ribosylhomocysteine lyase (169 aa).

Fe cation-binding residues include His-54, His-58, and Cys-128.

Belongs to the LuxS family. In terms of assembly, homodimer. Fe cation serves as cofactor.

The catalysed reaction is S-(5-deoxy-D-ribos-5-yl)-L-homocysteine = (S)-4,5-dihydroxypentane-2,3-dione + L-homocysteine. Functionally, involved in the synthesis of autoinducer 2 (AI-2) which is secreted by bacteria and is used to communicate both the cell density and the metabolic potential of the environment. The regulation of gene expression in response to changes in cell density is called quorum sensing. Catalyzes the transformation of S-ribosylhomocysteine (RHC) to homocysteine (HC) and 4,5-dihydroxy-2,3-pentadione (DPD). This chain is S-ribosylhomocysteine lyase, found in Shewanella sp. (strain MR-7).